Here is a 93-residue protein sequence, read N- to C-terminus: Ribonuclease P protein component 1 (93 aa).

Belongs to the eukaryotic/archaeal RNase P protein component 1 family. Consists of a catalytic RNA component and at least 4-5 protein subunits.

Its subcellular location is the cytoplasm. The catalysed reaction is Endonucleolytic cleavage of RNA, removing 5'-extranucleotides from tRNA precursor.. Functionally, part of ribonuclease P, a protein complex that generates mature tRNA molecules by cleaving their 5'-ends. In Methanosphaera stadtmanae (strain ATCC 43021 / DSM 3091 / JCM 11832 / MCB-3), this protein is Ribonuclease P protein component 1.